The primary structure comprises 64 residues: Large ribosomal subunit protein bL33 (64 aa).

2 stretches are compositionally biased toward basic and acidic residues: residues 16–25 and 33–42; these read EARTSSDPKR and TTEKNRRNTT. Positions 16 to 42 are disordered; that stretch reads EARTSSDPKRSNGVSRYTTEKNRRNTT.

This sequence belongs to the bacterial ribosomal protein bL33 family.

This chain is Large ribosomal subunit protein bL33, found in Prochlorococcus marinus (strain MIT 9301).